Here is a 2670-residue protein sequence, read N- to C-terminus: Inositol 1,4,5-trisphosphate-gated calcium channel ITPR3 (2670 aa).

The Cytoplasmic segment spans residues 1–2201; the sequence is MNEMSSFLHI…LIYWFSRRMT (2201 aa). MIR domains lie at 113-173, 174-224, 232-288, 295-372, and 378-434; these read GDVV…LRSN, GDNV…INLF, EEVL…VEVV, GGAG…LDPT, and DSFV…IVSV. Residues Arg-266, Thr-268, Leu-269, and Arg-270 each coordinate 1D-myo-inositol 1,4,5-trisphosphate. The disordered stretch occupies residues 321–344; it reads PSYKGDVSDPKAAGPGAQSRTGRR. 1D-myo-inositol 1,4,5-trisphosphate is bound by residues Arg-503, Lys-507, Arg-510, Tyr-567, Arg-568, and Lys-569. Arg-743 is a binding site for Ca(2+). Residues Ser-916 and Ser-934 each carry the phosphoserine modification. The Ca(2+) site is built by Glu-1122 and Glu-1125. Basic and acidic residues predominate over residues 1134–1153; sequence VKGEEGEAGASKDKKERPSD. Disordered regions lie at residues 1134-1164 and 1807-1849; these read VKGE…HGEK and NMSD…GLHR. 3 positions are modified to phosphoserine: Ser-1813, Ser-1832, and Ser-1834. Residues 1831–1842 are compositionally biased toward low complexity; sequence SSFSMPSSSRYS. Glu-1881 and Glu-1945 together coordinate Ca(2+). 3 residues coordinate ATP: Ala-1995, Glu-2148, and Lys-2151. A helical transmembrane segment spans residues 2202–2222; that stretch reads LWGSISFNLAVFINIIIAFFY. Residues 2223-2233 lie on the Extracellular side of the membrane; sequence PYVEGASTGVL. A helical membrane pass occupies residues 2234–2254; that stretch reads GSPLISLLFWILICFSIAALF. At 2255-2263 the chain is on the cytoplasmic side; it reads TKHYSVRPL. Residues 2264-2284 traverse the membrane as a helical segment; it reads IVALVLRSIYYLGIGPTLNIL. At 2285-2324 the chain is on the extracellular side; sequence GALNLTNKIVFVVSFVGNRGTFIRGYKAMVMDMEFLYHVG. The helical transmembrane segment at 2325-2345 threads the bilayer; sequence YILTSVLGLFAHELFYSILLF. The Cytoplasmic portion of the chain corresponds to 2346–2367; the sequence is DLIYREETLFNVIKSVTRNGRS. Residues 2368 to 2388 form a helical membrane-spanning segment; sequence ILLTALLALILVYLFSIVGFL. The Extracellular portion of the chain corresponds to 2389 to 2495; the sequence is FLKDDFILEV…ESLFPARVVY (107 aa). A disulfide bond links Cys-2454 and Cys-2460. A helical transmembrane segment spans residues 2496-2516; that stretch reads DLLFFFIVIIIVLNLIFGVII. Residues 2517-2670 are Cytoplasmic-facing; that stretch reads DTFADLRSEK…FVDVQNCMSR (154 aa). Residues Cys-2537 and Phe-2538 each contribute to the ATP site. Cys-2537 contacts Zn(2+). Cys-2540 and His-2557 together coordinate Zn(2+). Residues Lys-2559, His-2562, Asn-2563, and Met-2564 each coordinate ATP. His-2562 lines the Zn(2+) pocket. Thr-2580 is a Ca(2+) binding site. A phosphoserine mark is found at Ser-2608 and Ser-2669.

This sequence belongs to the InsP3 receptor family. As to quaternary structure, homotetramer. Homodimer. Interacts with TRPC1 and TRPC3. Interacts with TRPC4. Interacts with TRPV4. Interacts with SIGMAR1. Interacts with AKT1 and PML. Interacts with IRAG2 (via coiled-coil domain). Interacts with CABP1. Interacts with TMBIM4/LFG4. Interacts with CEMIP. Interacts with TESPA1. Interacts with TMEM203. Interacts with BOK; regulates ITPR3 expression. Interacts with BCL2L10. Interacts with CHGA and CHGB. Post-translationally, phosphorylated by AKT1 on serine and/or threonine residues.

The protein localises to the endoplasmic reticulum membrane. The protein resides in the cytoplasmic vesicle. It is found in the secretory vesicle membrane. The enzyme catalyses Ca(2+)(in) = Ca(2+)(out). Inositol 1,4,5-trisphosphate-gated calcium channel is regulated by cytosolic calcium in a biphasic manner. At low concentrations, cytosolic calcium binds at a high-affinity juxtamembrane domain (JD) calcium binding site, allowing ITPR3 to activate by escaping a low-energy resting state through an ensemble of preactivated states. At high cytosolic calcium concentrations, ITPR3 preferentially enters an inhibited state stabilized by calcium binding at a second, low-affinity cytoplasmic domain (CD) calcium binding site. In terms of biological role, inositol 1,4,5-trisphosphate-gated calcium channel that, upon 1D-myo-inositol 1,4,5-trisphosphate binding, transports calcium from the endoplasmic reticulum lumen to cytoplasm, thus releasing the intracellular calcium and therefore participates in cellular calcium ion homeostasis. 11D-myo-inositol 1,4,5-trisphosphate binds to the ligand-free channel without altering its global conformation, yielding the low-energy resting state, then progresses through resting-to preactivated transitions to the higher energy preactivated state, which increases affinity for calcium, promoting binding of the low basal cytosolic calcium at the juxtamembrane domain (JD) site, favoring the transition through the ensemble of high-energy intermediate states along the trajectory to the fully-open activated state. Upon opening, releases calcium in the cytosol where it can bind to the low-affinity cytoplasmic domain (CD) site and stabilizes the inhibited state to terminate calcium release. This is Inositol 1,4,5-trisphosphate-gated calcium channel ITPR3 from Rattus norvegicus (Rat).